Consider the following 955-residue polypeptide: 2-oxoglutarate dehydrogenase E1 component (955 aa).

It belongs to the alpha-ketoglutarate dehydrogenase family. As to quaternary structure, homodimer. Part of the 2-oxoglutarate dehydrogenase (OGDH) complex composed of E1 (2-oxoglutarate dehydrogenase), E2 (dihydrolipoamide succinyltransferase) and E3 (dihydrolipoamide dehydrogenase); the complex contains multiple copies of the three enzymatic components (E1, E2 and E3). The cofactor is thiamine diphosphate.

The enzyme catalyses N(6)-[(R)-lipoyl]-L-lysyl-[protein] + 2-oxoglutarate + H(+) = N(6)-[(R)-S(8)-succinyldihydrolipoyl]-L-lysyl-[protein] + CO2. E1 component of the 2-oxoglutarate dehydrogenase (OGDH) complex which catalyzes the decarboxylation of 2-oxoglutarate, the first step in the conversion of 2-oxoglutarate to succinyl-CoA and CO(2). In Bacillus cereus (strain ZK / E33L), this protein is 2-oxoglutarate dehydrogenase E1 component.